A 227-amino-acid chain; its full sequence is AN1-type zinc finger protein 3 (227 aa).

The A20-type zinc-finger motif lies at 12–44; sequence PSLPPRCPCGFWGSSKTMNLCSKCFADFQKKQP. Zn(2+) contacts are provided by C18, C20, C32, and C35. 2 disordered regions span residues 41–100 and 113–148; these read KKQP…EECG and PTKR…ETSR. The segment covering 49-59 has biased composition (polar residues); that stretch reads APSTSNSQSDL. Residues 66–77 show a composition bias toward low complexity; it reads SDNNNTSITTPT. 2 stretches are compositionally biased toward polar residues: residues 78–94 and 113–127; these read LSPS…VTSP and PTKR…SENE. The span at 135–148 shows a compositional bias: basic and acidic residues; that stretch reads RLLENTERSEETSR. The AN1-type zinc finger occupies 151-200; that stretch reads QKSRRRCFQCQTKLELVQQELGSCRCGYVFCMLHRLPEQHDCTFDHMGRG. Positions 157, 160, 174, 176, 181, 184, 190, and 192 each coordinate Zn(2+).

In Homo sapiens (Human), this protein is AN1-type zinc finger protein 3 (ZFAND3).